The following is a 262-amino-acid chain: Snake venom serine protease (262 aa).

An N-terminal signal peptide occupies residues 1–18 (MVLIRVLANLLILQLSYA). A propeptide spanning residues 19-24 (QKSSEL) is cleaved from the precursor. In terms of domain architecture, Peptidase S1 spans 25 to 253 (VIGGDECNIN…YTEWIQSIIA (229 aa)). 6 disulfide bridges follow: C31/C167, C50/C66, C102/C260, C146/C214, C178/C193, and C204/C229. Active-site charge relay system residues include H65 and D114. N125 and N158 each carry an N-linked (GlcNAc...) asparagine glycan. S208 functions as the Charge relay system in the catalytic mechanism.

It belongs to the peptidase S1 family. Snake venom subfamily. In terms of assembly, monomer. As to expression, expressed by the venom gland.

The protein localises to the secreted. Functionally, snake venom serine protease that may act in the hemostasis system of the prey. This chain is Snake venom serine protease, found in Crotalus durissus durissus (Central American rattlesnake).